The chain runs to 244 residues: 7-cyano-7-deazaguanine synthase (244 aa).

An ATP-binding site is contributed by 14–24; that stretch reads FSGGQDSATCL. Zn(2+)-binding residues include Cys-202, Cys-217, Cys-220, and Cys-223.

The protein belongs to the QueC family. Requires Zn(2+) as cofactor.

The catalysed reaction is 7-carboxy-7-deazaguanine + NH4(+) + ATP = 7-cyano-7-deazaguanine + ADP + phosphate + H2O + H(+). Its pathway is purine metabolism; 7-cyano-7-deazaguanine biosynthesis. Catalyzes the ATP-dependent conversion of 7-carboxy-7-deazaguanine (CDG) to 7-cyano-7-deazaguanine (preQ(0)). The chain is 7-cyano-7-deazaguanine synthase from Paraburkholderia phytofirmans (strain DSM 17436 / LMG 22146 / PsJN) (Burkholderia phytofirmans).